The chain runs to 56 residues: uncharacterized protein (56 aa).

The chain crosses the membrane as a helical span at residues 2-22 (ILYIIVAISILLNIILGIKVI).

It is found in the membrane. This is an uncharacterized protein from Methanocaldococcus jannaschii (strain ATCC 43067 / DSM 2661 / JAL-1 / JCM 10045 / NBRC 100440) (Methanococcus jannaschii).